Here is a 430-residue protein sequence, read N- to C-terminus: UPF0597 protein CV_1824 (430 aa).

This sequence belongs to the UPF0597 family.

The chain is UPF0597 protein CV_1824 from Chromobacterium violaceum (strain ATCC 12472 / DSM 30191 / JCM 1249 / CCUG 213 / NBRC 12614 / NCIMB 9131 / NCTC 9757 / MK).